The chain runs to 134 residues: NADH-quinone oxidoreductase subunit A 1 (134 aa).

Helical transmembrane passes span 10 to 30 (LIPLAIYTLFAVGLIGILLLA), 65 to 85 (FYLIAIFFIVFDVEGAFILAW), and 94 to 114 (IPGLVHITLFITVLLLGLVWL).

This sequence belongs to the complex I subunit 3 family. As to quaternary structure, NDH-1 is composed of 14 different subunits. Subunits NuoA, H, J, K, L, M, N constitute the membrane sector of the complex.

The protein resides in the cell inner membrane. The catalysed reaction is a quinone + NADH + 5 H(+)(in) = a quinol + NAD(+) + 4 H(+)(out). NDH-1 shuttles electrons from NADH, via FMN and iron-sulfur (Fe-S) centers, to quinones in the respiratory chain. The immediate electron acceptor for the enzyme in this species is believed to be ubiquinone. Couples the redox reaction to proton translocation (for every two electrons transferred, four hydrogen ions are translocated across the cytoplasmic membrane), and thus conserves the redox energy in a proton gradient. The protein is NADH-quinone oxidoreductase subunit A 1 of Citrifermentans bemidjiense (strain ATCC BAA-1014 / DSM 16622 / JCM 12645 / Bem) (Geobacter bemidjiensis).